A 363-amino-acid chain; its full sequence is GDP-fucose transporter 1 (363 aa).

8 consecutive transmembrane segments (helical) span residues 33–55, 75–97, 110–129, 139–161, 166–184, 194–213, 226–248, and 263–285; these read FLLRALQIALVVSLYWVTSISMV, VTFYQCLVTSLLCKGLSTLATCC, LKVARSVLPLSVVFIGMITF, VPFYNVGRSLTTVFNVLLSYLLL, SFYALLTCGVIIGGFWLGI, SLTGTIFGVLASLCVSLNAI, IWRLTFYNNVNACVLFLPLMIVL, and AHFWLMMTLGGLFGFAIGYVTGL.

The protein belongs to the TPT transporter family. SLC35C subfamily.

The protein resides in the golgi apparatus membrane. The enzyme catalyses GMP(out) + GDP-beta-L-fucose(in) = GMP(in) + GDP-beta-L-fucose(out). Functionally, antiporter specific for GDP-l-fucose and depending on the concomitant reverse transport of GMP. Involved in GDP-fucose import from the cytoplasm into the Golgi lumen. This chain is GDP-fucose transporter 1 (Slc35c1), found in Mus musculus (Mouse).